Consider the following 138-residue polypeptide: Basic phospholipase A2 homolog acutohaemolysin (138 aa).

Residues 1-16 (MRALWIVAVLLVGVEG) form the signal peptide. 7 disulfide bridges follow: cysteine 42/cysteine 131, cysteine 44/cysteine 60, cysteine 59/cysteine 111, cysteine 65/cysteine 138, cysteine 66/cysteine 104, cysteine 73/cysteine 97, and cysteine 91/cysteine 102. An important for membrane-damaging activities in eukaryotes and bacteria; heparin-binding region spans residues 121-133 (KSFRYHLKPSCKK).

In terms of assembly, monomer. In terms of tissue distribution, expressed by the venom gland.

It localises to the secreted. Its function is as follows. Snake venom phospholipase A2 homolog that lacks enzymatic activity. Is myotoxic. Has a strong indirect hemolytic activity and anticoagulant activity. A model of myotoxic mechanism has been proposed: an apo Lys49-PLA2 is activated by the entrance of a hydrophobic molecule (e.g. fatty acid) at the hydrophobic channel of the protein leading to a reorientation of a monomer. This reorientation causes a transition between 'inactive' to 'active' states, causing alignment of C-terminal and membrane-docking sites (MDoS) side-by-side and putting the membrane-disruption sites (MDiS) in the same plane, exposed to solvent and in a symmetric position for both monomers. The MDoS region stabilizes the toxin on membrane by the interaction of charged residues with phospholipid head groups. Subsequently, the MDiS region destabilizes the membrane with penetration of hydrophobic residues. This insertion causes a disorganization of the membrane, allowing an uncontrolled influx of ions (i.e. calcium and sodium), and eventually triggering irreversible intracellular alterations and cell death. The chain is Basic phospholipase A2 homolog acutohaemolysin from Deinagkistrodon acutus (Hundred-pace snake).